Reading from the N-terminus, the 330-residue chain is MTGSSSQFQQLEKLGEGTYATVYKGRNRTNGQLVALKEINLDSEEGTPSTAIREISLMKELDHENIVTLYDVIHTENKLTLVFEFMDKDLKKYMEAHGNQGALDLKIVKSFIFQLLKGIMFCHDNRVLHRDLKPQNLLINNKGELKLGDFGLARAFGIPFNTFSNEVVTLWYRAPDVLLGSRAYTASIDIWSAGCIFAEMCTGKPLFPGTSNDDQLIKIFRLMGTPNERTWPGVSSYANFKNNWQIFVPQDLRLLIPNLDSMGLNLLSSLLQMRPDARITARQALQHPWFHEISNPNPLMQHLADPYQQSQQQSQQQAQQSQQMDPQTYR.

The Protein kinase domain maps to 8 to 290 (FQQLEKLGEG…ARQALQHPWF (283 aa)). ATP contacts are provided by residues 14–22 (LGEGTYATV) and K37. D131 serves as the catalytic Proton acceptor. Positions 300-330 (MQHLADPYQQSQQQSQQQAQQSQQMDPQTYR) are disordered. Residues 308–323 (QQSQQQSQQQAQQSQQ) show a composition bias toward low complexity.

Belongs to the protein kinase superfamily. CMGC Ser/Thr protein kinase family. CDC2/CDKX subfamily. As to quaternary structure, interacts with a number of cyclins.

It carries out the reaction L-seryl-[protein] + ATP = O-phospho-L-seryl-[protein] + ADP + H(+). It catalyses the reaction L-threonyl-[protein] + ATP = O-phospho-L-threonyl-[protein] + ADP + H(+). Functionally, when phosphate concentrations are high it phosphorylates the PHO4 transcription factor thus establishing repression. The sequence is that of Negative regulator of the PHO system (PHO85) from Debaryomyces hansenii (strain ATCC 36239 / CBS 767 / BCRC 21394 / JCM 1990 / NBRC 0083 / IGC 2968) (Yeast).